The chain runs to 560 residues: MLGLLGATTLMLVAGAPWVLPAGGADLRSPENVVVSIIDDNFILKWKSSSESVSNVTFSADYQITGMDNWIKLPGCQYVTSTECNFSSIKLKSVYEKTKLRIRAETGNSTSPWYEVEPFIPFQEAQIGPPDVHLEAEDKAIIINLSPPGTKNSVMWAMDSSSFVYSLVIWKNSSSLEERTKTVYARDKIHQLSPETTYCLKVKAGLRSPRKVGVYSPVYCINTTVKHHLPSPENLEINAENRVYVLKWNYTYENVTFQAQWLHAFLKKIPEDHSDKWKQIPNCENVKTTHCVFPQNVFTKGIFFIRVQASNGNSTSLWSEEKRFNTEMQTILFPPVINMKPINDASLRVGIGAPKESEDKSVNQLYPLIYEVIFRENTSDTERDVLEKRTDFTFSNLKPLTVYCVKARALIENDRWNRSSVFSDTVCEKTKPGSTSQAWLIAGILSAILLFPAVFYGVKVVSRCINYVFFPSSKPPSTIDEYFAEQPLKNLLLSTSEEQTEICFIVENTNTITTIEETDQIDDNHSRCSSQTNRDSGVYSNEDENSGSKIGEEILRQAAV.

Positions 1–24 (MLGLLGATTLMLVAGAPWVLPAGG) are cleaved as a signal peptide. Topologically, residues 25 to 437 (ADLRSPENVV…EKTKPGSTSQ (413 aa)) are extracellular. 4 Fibronectin type-III domains span residues 29-125 (SPEN…FQEA), 133-224 (HLEA…INTT), 231-329 (SPEN…TEMQ), and 333-433 (FPPV…TKPG). N55 carries an N-linked (GlcNAc...) asparagine glycan. Cysteines 76 and 84 form a disulfide. N-linked (GlcNAc...) asparagine glycosylation is found at N85, N108, and N172. C199 and C220 are disulfide-bonded. N222, N249, and N254 each carry an N-linked (GlcNAc...) asparagine glycan. An intrachain disulfide couples C283 to C291. 3 N-linked (GlcNAc...) asparagine glycosylation sites follow: N313, N377, and N417. Cysteines 404 and 427 form a disulfide. A helical membrane pass occupies residues 438 to 458 (AWLIAGILSAILLFPAVFYGV). Over 459–560 (KVVSRCINYV…GEEILRQAAV (102 aa)) the chain is Cytoplasmic. C464 is lipidated: S-palmitoyl cysteine. Phosphotyrosine; by TYK2 is present on residues Y467 and Y482. The segment at 492 to 501 (LLSTSEEQTE) is important for interaction with TYK2. Residues S496 and S536 each carry the phosphoserine modification. The interval 520–560 (QIDDNHSRCSSQTNRDSGVYSNEDENSGSKIGEEILRQAAV) is disordered. Residues 527–539 (RCSSQTNRDSGVY) show a composition bias toward polar residues. Residues 550–560 (IGEEILRQAAV) are compositionally biased toward basic and acidic residues.

It belongs to the type II cytokine receptor family. Heterodimer with IFNAR2; forming the receptor for type I interferon. Interacts with TYK2. Interacts with STAT1 and STAT2; the interaction requires its phosphorylation at Tyr-482. Interacts (serine-phosphorylated form) with FBXW11, the substrate recognition component of a SCF (SKP1-CUL1-F-box protein) E3 ubiquitin-protein ligase complex. Interacts with SHMT2; this promotes interaction with ABRAXAS2 and the BRISC complex. Interacts with TRIM10; this interaction prevents association between IFNAR1 and TYK2. Post-translationally, ubiquitinated, leading to its internalization and degradation. Polyubiquitinated via 'Lys-48'-linked and 'Lys-63'-linked ubiquitin chains, leading to receptor internalization and lysosomal degradation. The 'Lys-63'-linked ubiquitin chains are cleaved off by the BRISC complex. Phosphorylated on tyrosine residues in response to interferon-binding: phosphorylation by TYK2 tyrosine kinase creates docking sites for STAT proteins. Phosphorylated on serine residues in response to interferon binding; this promotes interaction with FBXW11 and ubiquitination. In terms of processing, palmitoylation at Cys-464 is required for the activation of STAT1 and STAT2.

It is found in the cell membrane. Its subcellular location is the late endosome. It localises to the lysosome. In terms of biological role, together with IFNAR2, forms the heterodimeric receptor for type I interferons (including interferons alpha, beta, epsilon, omega and kappa). Type I interferon binding activates the JAK-STAT signaling cascade, resulting in transcriptional activation or repression of interferon-regulated genes that encode the effectors of the interferon response. Mechanistically, type I interferon-binding brings the IFNAR1 and IFNAR2 subunits into close proximity with one another, driving their associated Janus kinases (JAKs) (TYK2 bound to IFNAR1 and JAK1 bound to IFNAR2) to cross-phosphorylate one another. The activated kinases phosphorylate specific tyrosine residues on the intracellular domains of IFNAR1 and IFNAR2, forming docking sites for the STAT transcription factors. STAT proteins are then phosphorylated by the JAKs, promoting their translocation into the nucleus to regulate expression of interferon-regulated genes. Can also act independently of IFNAR2: form an active IFNB1 receptor by itself and activate a signaling cascade that does not involve activation of the JAK-STAT pathway. The sequence is that of Interferon alpha/beta receptor 1 (IFNAR1) from Sus scrofa (Pig).